The sequence spans 694 residues: Beta-galactosidase (694 aa).

The tract at residues 1–31 (MGKRFPSGWFSPRVHPPRRQRSPMTNQATPG) is disordered. The span at 22-31 (SPMTNQATPG) shows a compositional bias: polar residues. Residues arginine 144 and asparagine 182 each coordinate substrate. Catalysis depends on glutamate 183, which acts as the Proton donor. The active-site Nucleophile is the glutamate 341. Substrate is bound by residues tryptophan 349 and 389–392 (EKFH).

It belongs to the glycosyl hydrolase 42 family. Homotrimer.

It carries out the reaction Hydrolysis of terminal non-reducing beta-D-galactose residues in beta-D-galactosides.. With respect to regulation, strongly inhibited by glucose. No activity is lost during treatment with 100 mM EDTA after 2 hours. Activity not considerably affected by metal ions (5 mM), including Na(+), K(+), Mg(2+), Co(2+) and Ca(2+). Completely inhibited by Cu(2+) and Zn(2+) (5 mM) and is strongly inhibited by Mn(2+) (11%), Fe(2+) (25%) and Ni(2+) (38%) in comparison with the activity in the absence of cations (100%). Activity not affected by dithiothreitol, beta-mercaptoethanol and L-cysteine whereas reduced glutathione almost completely inactivates it. With ONPG as substrate, the addition of ethanol up to 20% still slightly stimulates activity. The activity increases up to 120% in the presence of 8% v/v ethanol at pH 5.5. Functionally, hydrolyzes p-nitrophenyl-beta-D-galactopyranoside (PNPG), o-nitrophenyl-beta-D-galactopyranoside (ONPG) and chromogen 5-bromo-4-chloro-3-indolyl-beta-D-galactopyranoside (X-gal), with highest activity against PNPG. Also acts on p-nitrophenyl-beta-D-glucopyranoside (PNPGlu) and o-nitrophenyl-beta-D-glucopyranoside (ONPGlu), but with significantly lower activity. The polypeptide is Beta-galactosidase (Arthrobacter sp).